Here is a 338-residue protein sequence, read N- to C-terminus: MRVLGIETSCDETGIAVYDDELGLLSHTLYSQVKLHADYGGVVPELASRDHVRKIVPLIRQALKDANTEMADLDGIAYTKGPGLIGALLVGACVGRSLAFAWDKPAIGVHHMEGHLLAPMLEDDAPEFPFVALLVSGGHSMLVKVDGIGRYEVLGESVDDAAGEAFDKTAKLMGLDYPGGPRLAKLAAKGLPAGYKFPRPMTDRPGLDFSFSGLKTFTANTIAAEPDDEQTRANIARAFEEAVVDTLAIKCRRALKQTGYNRLVIAGGVSANTRLRETLAEMMNSLGGQVFYPRGEFCTDNGAMIAFAGLQRLKAGQHEDLAVKGQPRWPLDTLPPVA.

Residues histidine 111 and histidine 115 each coordinate Fe cation. Substrate is bound by residues 134–138 (LVSGG), aspartate 167, glycine 180, and asparagine 272. Residue aspartate 300 participates in Fe cation binding.

Belongs to the KAE1 / TsaD family. The cofactor is Fe(2+).

It is found in the cytoplasm. The enzyme catalyses L-threonylcarbamoyladenylate + adenosine(37) in tRNA = N(6)-L-threonylcarbamoyladenosine(37) in tRNA + AMP + H(+). In terms of biological role, required for the formation of a threonylcarbamoyl group on adenosine at position 37 (t(6)A37) in tRNAs that read codons beginning with adenine. Is involved in the transfer of the threonylcarbamoyl moiety of threonylcarbamoyl-AMP (TC-AMP) to the N6 group of A37, together with TsaE and TsaB. TsaD likely plays a direct catalytic role in this reaction. The protein is tRNA N6-adenosine threonylcarbamoyltransferase of Shewanella baltica (strain OS223).